A 159-amino-acid polypeptide reads, in one-letter code: Outer envelope pore protein 16-3, chloroplastic/mitochondrial (159 aa).

M1 is subject to N-acetylmethionine. The segment at 1 to 65 (MDPAEMRYLE…IRTLKMMGTH (65 aa)) is contains beta strands. Transmembrane regions (helical) follow at residues 24 to 40 (ITGF…LATW), 62 to 79 (MGTH…YIGV), and 92 to 109 (FYNG…VLGY).

It belongs to the Tim17/Tim22/Tim23 family. Plastid outer envelope porin OEP16 (TC 1.B.30) subfamily. As to quaternary structure, homodimer and oligomers in membrane. Part of both the NADH-ubiquinone oxidoreductase complex I and of the TIM17:23 complex. Interacts with TIM23-2.

The protein localises to the plastid. Its subcellular location is the chloroplast outer membrane. It localises to the mitochondrion outer membrane. The protein resides in the mitochondrion inner membrane. In terms of biological role, voltage-dependent high-conductance channel with a slight cation-selectivity; selective for amino acids but excludes triosephosphates or uncharged sugars. Non-essential amino acid-selective channel protein and translocation pore for NADPH:protochlorophyllide oxidoreductase A (PORA) and possibly PORB. The polypeptide is Outer envelope pore protein 16-3, chloroplastic/mitochondrial (OEP163) (Arabidopsis thaliana (Mouse-ear cress)).